The sequence spans 429 residues: MKKQRNLRSMAAQAVEQVVEQGQSLSNILPPLQQKVSDKDKALLQELCFGVLRTLSQLDWLINKLMARPMTGKQRTVHYLIMVGLYQLLYTRIPPHAALAETVEGAIAIKRPQLKGLINGVLRQFQRQQEELLAKFNASDARYLHPSWLLKRLQKAYPEQWQSIVEANNQRPPMWLRVNRTHHSRDSWLALLDEAGMKGFPHADYPDAVRLETPAPVHALPGFEDGWVTVQDASAQGCMTWLAPQNSEHILDLCAAPGGKTTHILEVAPEAQVVAVDIDEQRLSRVYDNLKRLGMKATVKQGDGRYPSQWCGEQQFDRILLDAPCSATGVIRHHPDIKWLRRDRDIPELAQLQSEILDAIWPHLKSGGTLVYATCSVLPEENSLQIKAFLQRTADAELCETGAPEQPGKQNLPGAEEGDGFFYAKLIKK.

S-adenosyl-L-methionine is bound by residues 254 to 260 (CAAPGGK), Asp277, Asp303, and Asp322. Cys375 (nucleophile) is an active-site residue.

This sequence belongs to the class I-like SAM-binding methyltransferase superfamily. RsmB/NOP family.

It is found in the cytoplasm. The catalysed reaction is cytidine(967) in 16S rRNA + S-adenosyl-L-methionine = 5-methylcytidine(967) in 16S rRNA + S-adenosyl-L-homocysteine + H(+). Specifically methylates the cytosine at position 967 (m5C967) of 16S rRNA. The sequence is that of Ribosomal RNA small subunit methyltransferase B from Shigella boydii serotype 18 (strain CDC 3083-94 / BS512).